The sequence spans 225 residues: Uridylate kinase (225 aa).

Asp-6 is a Mg(2+) binding site. ATP is bound at residue 9-10 (GS). Gly-44 serves as a coordination point for UMP. Gly-45 and Arg-49 together coordinate ATP. UMP contacts are provided by residues Asp-66 and 114–120 (THPGHTT). Thr-120 and Asp-121 together coordinate Mg(2+). Positions 140, 141, 146, and 149 each coordinate ATP. Residue Gly-179 coordinates UMP. Residue Ser-182 participates in Mg(2+) binding. Residue Ser-182 coordinates ATP.

Belongs to the UMP kinase family. Homohexamer; trimer of dimers.

Its subcellular location is the cytoplasm. It carries out the reaction UMP + ATP = UDP + ADP. It functions in the pathway pyrimidine metabolism; CTP biosynthesis via de novo pathway; UDP from UMP (UMPK route): step 1/1. Its activity is regulated as follows. Inhibited by UTP. Functionally, catalyzes the reversible phosphorylation of UMP to UDP, with ATP as the most efficient phosphate donor. The chain is Uridylate kinase (pyrH) from Pyrococcus furiosus (strain ATCC 43587 / DSM 3638 / JCM 8422 / Vc1).